Here is a 274-residue protein sequence, read N- to C-terminus: MAIHLYKTSTPSTRKGAVDRQVKSNPRNNLIYGQHRCGKGRNARGIITAGHRGGGHKRLYRKIDFRRNEKDIYGKIVTIEYDPNRNAYICLIHYGGGEKRYILHPRGALIGDTIVSGTEVPIKMGNALPLTDMPLGTAIHNIEITLGKGGQLARAAGAVAKLIAKEGKSATLKLPSGEVRLIPKNCSATVGQVGNVGVNQKSLGRAGSKCWLGKRPVVRGVVMNPVDHPHGGGEGRAPIGRKKPATPWGYPALGRRSRKRNKYSDNLILRRRSK.

Residues 224-274 (NPVDHPHGGGEGRAPIGRKKPATPWGYPALGRRSRKRNKYSDNLILRRRSK) form a disordered region.

This sequence belongs to the universal ribosomal protein uL2 family. Part of the 50S ribosomal subunit.

The protein resides in the plastid. Its subcellular location is the chloroplast. This chain is Large ribosomal subunit protein uL2cz/uL2cy (rpl2-A), found in Morus indica (Mulberry).